Reading from the N-terminus, the 157-residue chain is Small ribosomal subunit protein uS7 (157 aa).

The protein belongs to the universal ribosomal protein uS7 family. Part of the 30S ribosomal subunit. Contacts proteins S9 and S11.

Functionally, one of the primary rRNA binding proteins, it binds directly to 16S rRNA where it nucleates assembly of the head domain of the 30S subunit. Is located at the subunit interface close to the decoding center, probably blocks exit of the E-site tRNA. In Psychrobacter sp. (strain PRwf-1), this protein is Small ribosomal subunit protein uS7.